Consider the following 163-residue polypeptide: Protein FAM167B (163 aa).

Residues 73–132 are a coiled coil; it reads FDSMDSALEWLRRELREMQAQDRQLAGQLLRLRAQLHRLKMDQACHLHQELLDEAELELE.

The protein belongs to the FAM167 (SEC) family.

The polypeptide is Protein FAM167B (FAM167B) (Homo sapiens (Human)).